The following is an 87-amino-acid chain: Phosphoribosyl-ATP pyrophosphatase (87 aa).

Belongs to the PRA-PH family.

Its subcellular location is the cytoplasm. It catalyses the reaction 1-(5-phospho-beta-D-ribosyl)-ATP + H2O = 1-(5-phospho-beta-D-ribosyl)-5'-AMP + diphosphate + H(+). The protein operates within amino-acid biosynthesis; L-histidine biosynthesis; L-histidine from 5-phospho-alpha-D-ribose 1-diphosphate: step 2/9. This chain is Phosphoribosyl-ATP pyrophosphatase, found in Kocuria rhizophila (strain ATCC 9341 / DSM 348 / NBRC 103217 / DC2201).